We begin with the raw amino-acid sequence, 278 residues long: MERLVIRMPFSHLSTYSLVWVMAAVVLCTAQVQVVTQDEREQLYTPASLKCSLQNAQEALIVTWQKKKAVSPENMVTFSENHGVVIQPAYKDKINITQLGLQNSTITFWNITLEDEGCYMCLFNTFGFGKISGTACLTVYVQPIVSLHYKFSEDHLNITCSATARPAPMVFWKVPRSGIENSTVTLSHPNGTTSVTSILHIKDPKNQVGKEVICQVLHLGTVTDFKQTVNKGYWFSVPLLLSIVSLVILLVLISILLYWKRHRNQDRGELSQGVQKMT.

A signal peptide spans 1–30 (MERLVIRMPFSHLSTYSLVWVMAAVVLCTA). An Ig-like V-type domain is found at 31 to 141 (QVQVVTQDER…SGTACLTVYV (111 aa)). The Extracellular segment spans residues 31–232 (QVQVVTQDER…TDFKQTVNKG (202 aa)). Cystine bridges form between C51/C121 and C118/C136. N-linked (GlcNAc...) asparagine glycans are attached at residues N95, N103, and N110. In terms of domain architecture, Ig-like C2-type spans 142 to 232 (QPIVSLHYKF…TDFKQTVNKG (91 aa)). N157, N181, and N190 each carry an N-linked (GlcNAc...) asparagine glycan. A disulfide bond links C160 and C214. Residues 233 to 259 (YWFSVPLLLSIVSLVILLVLISILLYW) traverse the membrane as a helical segment. Over 260 to 278 (KRHRNQDRGELSQGVQKMT) the chain is Cytoplasmic.

CD200 and CD200R1 interact via their respective N-terminal Ig-like domains.

Its subcellular location is the cell membrane. In terms of biological role, costimulates T-cell proliferation. May regulate myeloid cell activity in a variety of tissues. This chain is OX-2 membrane glycoprotein (CD200), found in Homo sapiens (Human).